The chain runs to 61 residues: Myrmicitoxin(1)-Pm5a (61 aa).

The N-terminal stretch at 1–23 is a signal peptide; sequence MKAIIFLFAVLTVVAIIIPIISG. Positions 24 to 33 are excised as a propeptide; it reads EPNAGPLAAS. The residue at position 60 (glutamine 60) is a Glutamine amide.

The protein belongs to the formicidae venom clade 2 family. Expressed by the venom gland.

It localises to the secreted. Functionally, toxin that causes a rapid and irreversible paralysis when intrathoracically injected into insects (blowflies). Does not cause spontaneous nocifensive behaviors by intraplantar injection in mice. This is Myrmicitoxin(1)-Pm5a from Pogonomyrmex maricopa (Maricopa harvester ant).